A 114-amino-acid chain; its full sequence is Large ribosomal subunit protein bL19 (114 aa).

This sequence belongs to the bacterial ribosomal protein bL19 family.

Its function is as follows. This protein is located at the 30S-50S ribosomal subunit interface and may play a role in the structure and function of the aminoacyl-tRNA binding site. In Listeria monocytogenes serovar 1/2a (strain ATCC BAA-679 / EGD-e), this protein is Large ribosomal subunit protein bL19 (rplS).